The sequence spans 97 residues: Co-chaperonin GroES (97 aa).

Belongs to the GroES chaperonin family. Heptamer of 7 subunits arranged in a ring. Interacts with the chaperonin GroEL.

Its subcellular location is the cytoplasm. Functionally, together with the chaperonin GroEL, plays an essential role in assisting protein folding. The GroEL-GroES system forms a nano-cage that allows encapsulation of the non-native substrate proteins and provides a physical environment optimized to promote and accelerate protein folding. GroES binds to the apical surface of the GroEL ring, thereby capping the opening of the GroEL channel. The chain is Co-chaperonin GroES from Bifidobacterium longum (strain NCC 2705).